The chain runs to 249 residues: MIQMTLIQIDNYGPWTVTPTPRNEADLQIMQAELYADLQRQFAARQGLVFFTRFDNMLAVTNGMDLEDHRRIQKSIGNRYPITVSMGVGAAETPYDAQRNASRALQSHGGAQSEERKEVLAIDGLVDEGYVQIAHIDINGITETMTDIVPAYDTSFIVNRVQHFLMKKLIKEGALLFFIGGDNFMSPCNGLEPQGLLRIINEIDDEINVALKAGIGKAPTAEKAANLADLALEEIRGGFTYDLVHVMKE.

The protein belongs to the archaeal-type GTP cyclohydrolase family.

It catalyses the reaction GTP + 3 H2O = 2-amino-5-formylamino-6-(5-phospho-D-ribosylamino)pyrimidin-4(3H)-one + 2 phosphate + 2 H(+). Its function is as follows. Catalyzes the formation of 2-amino-5-formylamino-6-ribofuranosylamino-4(3H)-pyrimidinone ribonucleotide monophosphate and inorganic phosphate from GTP. Also has an independent pyrophosphate phosphohydrolase activity. In Methanothermobacter thermautotrophicus (strain ATCC 29096 / DSM 1053 / JCM 10044 / NBRC 100330 / Delta H) (Methanobacterium thermoautotrophicum), this protein is GTP cyclohydrolase III.